The following is a 181-amino-acid chain: NADH-quinone oxidoreductase subunit I 2 (181 aa).

4Fe-4S ferredoxin-type domains follow at residues 44 to 74 (LNRY…VEGA) and 90 to 119 (RVYQ…MTND). [4Fe-4S] cluster contacts are provided by C54, C57, C60, C64, C99, C102, C105, and C109.

The protein belongs to the complex I 23 kDa subunit family. As to quaternary structure, NDH-1 is composed of 14 different subunits. Subunits NuoA, H, J, K, L, M, N constitute the membrane sector of the complex. The cofactor is [4Fe-4S] cluster.

The protein resides in the cell membrane. The catalysed reaction is a quinone + NADH + 5 H(+)(in) = a quinol + NAD(+) + 4 H(+)(out). In terms of biological role, NDH-1 shuttles electrons from NADH, via FMN and iron-sulfur (Fe-S) centers, to quinones in the respiratory chain. The immediate electron acceptor for the enzyme in this species is believed to be menaquinone. Couples the redox reaction to proton translocation (for every two electrons transferred, four hydrogen ions are translocated across the cytoplasmic membrane), and thus conserves the redox energy in a proton gradient. The chain is NADH-quinone oxidoreductase subunit I 2 from Mycolicibacterium paratuberculosis (strain ATCC BAA-968 / K-10) (Mycobacterium paratuberculosis).